A 282-amino-acid polypeptide reads, in one-letter code: Bis(5'-nucleosyl)-tetraphosphatase, symmetrical (282 aa).

The protein belongs to the Ap4A hydrolase family.

The enzyme catalyses P(1),P(4)-bis(5'-adenosyl) tetraphosphate + H2O = 2 ADP + 2 H(+). Its function is as follows. Hydrolyzes diadenosine 5',5'''-P1,P4-tetraphosphate to yield ADP. This Enterobacter sp. (strain 638) protein is Bis(5'-nucleosyl)-tetraphosphatase, symmetrical.